We begin with the raw amino-acid sequence, 175 residues long: Bifunctional protein PyrR (175 aa).

The PRPP-binding signature appears at 98–110 (VIIIDDVLYTGRT).

It belongs to the purine/pyrimidine phosphoribosyltransferase family. PyrR subfamily. Homodimer and homohexamer; in equilibrium.

The enzyme catalyses UMP + diphosphate = 5-phospho-alpha-D-ribose 1-diphosphate + uracil. Regulates transcriptional attenuation of the pyrimidine nucleotide (pyr) operon by binding in a uridine-dependent manner to specific sites on pyr mRNA. This disrupts an antiterminator hairpin in the RNA and favors formation of a downstream transcription terminator, leading to a reduced expression of downstream genes. In terms of biological role, also displays a weak uracil phosphoribosyltransferase activity which is not physiologically significant. The chain is Bifunctional protein PyrR from Staphylococcus carnosus (strain TM300).